The following is a 359-amino-acid chain: MEPISVSIYTSDNYSEEVGSGDYDSNKEPCFRDENVHFNRIFLPTIYFIIFLTGIVGNGLVILVMGYQKKLRSMTDKYRLHLSVADLLFVITLPFWAVDAMADWYFGKFLCKAVHIIYTVNLYSSVLILAFISLDRYLAIVHATNSQRPRKLLAEKAVYVGVWIPALLLTIPDFIFADVSQGDISQGDDRYICDRLYPDSLWMVVFQFQHIMVGLILPGIVILSCYCIIISKLSHSKGHQKRKALKTTVILILAFFACWLPYYVGISIDSFILLGVIKQGCDFESIVHKWISITEALAFFHCCLNPILYAFLGAKFKSSAQHALNSMSRGSSLKILSKGKRGGHSSVSTESESSSFHSS.

Residues 1–23 (MEPISVSIYTSDNYSEEVGSGDY) are important for chemokine binding and signaling. Residues 1–40 (MEPISVSIYTSDNYSEEVGSGDYDSNKEPCFRDENVHFNR) are Extracellular-facing. Tyr-9 bears the Sulfotyrosine mark. The N-linked (GlcNAc...) asparagine glycan is linked to Asn-13. Position 14 is a sulfotyrosine (Tyr-14). An O-linked (Xyl...) (chondroitin sulfate) serine glycan is attached at Ser-20. The residue at position 23 (Tyr-23) is a Sulfotyrosine. Cystine bridges form between Cys-30/Cys-281 and Cys-111/Cys-193. The chain crosses the membrane as a helical span at residues 41 to 65 (IFLPTIYFIIFLTGIVGNGLVILVM). Residues 66 to 79 (GYQKKLRSMTDKYR) lie on the Cytoplasmic side of the membrane. The chain crosses the membrane as a helical span at residues 80 to 101 (LHLSVADLLFVITLPFWAVDAM). The segment at 96 to 99 (WAVD) is chemokine binding. The Extracellular portion of the chain corresponds to 102-112 (ADWYFGKFLCK). A helical membrane pass occupies residues 113 to 132 (AVHIIYTVNLYSSVLILAFI). The segment at 115–119 (HIIYT) is chemokine binding. Residues 133–156 (SLDRYLAIVHATNSQRPRKLLAEK) lie on the Cytoplasmic side of the membrane. Positions 135–137 (DRY) match the Important for signaling motif. Positions 137–149 (YLAIVHATNSQRP) are involved in dimerization; when bound to chemokine. A helical transmembrane segment spans residues 157 to 176 (AVYVGVWIPALLLTIPDFIF). Over 177–202 (ADVSQGDISQGDDRYICDRLYPDSLW) the chain is Extracellular. The segment at 193–197 (CDRLY) is chemokine binding, important for signaling. An involved in dimerization region spans residues 198 to 217 (PDSLWMVVFQFQHIMVGLIL). A helical transmembrane segment spans residues 203 to 223 (MVVFQFQHIMVGLILPGIVIL). Residues 224-248 (SCYCIIISKLSHSKGHQKRKALKTT) lie on the Cytoplasmic side of the membrane. The helical transmembrane segment at 249-268 (VILILAFFACWLPYYVGISI) threads the bilayer. Residues 269-289 (DSFILLGVIKQGCDFESIVHK) lie on the Extracellular side of the membrane. The segment at 273 to 275 (LLG) is involved in dimerization. Residues 290-309 (WISITEALAFFHCCLNPILY) form a helical membrane-spanning segment. Topologically, residues 310–359 (AFLGAKFKSSAQHALNSMSRGSSLKILSKGKRGGHSSVSTESESSSFHSS) are cytoplasmic. Phosphoserine is present on residues Ser-326 and Ser-328. Phosphoserine; by PKC and GRK6 is present on residues Ser-331 and Ser-332. Residues 335-359 (ILSKGKRGGHSSVSTESESSSFHSS) are disordered. A Phosphoserine; by GRK6 modification is found at Ser-337. Lys-338 is covalently cross-linked (Glycyl lysine isopeptide (Lys-Gly) (interchain with G-Cter in ubiquitin)). The segment covering 344–359 (HSSVSTESESSSFHSS) has biased composition (low complexity). Ser-346 carries the post-translational modification Phosphoserine; by GRK6. A phosphoserine mark is found at Ser-355 and Ser-358.

Belongs to the G-protein coupled receptor 1 family. In terms of assembly, monomer. Can form homodimers. Interacts with CD164. Interacts with ARRB2; the interaction is dependent on the C-terminal phosphorylation of CXCR4 and allows activation of MAPK1 and MAPK3. Interacts with ARR3; the interaction is dependent on the C-terminal phosphorylation of CXCR4 and modulates calcium mobilization. Interacts with RNF113A; the interaction, enhanced by CXCL12, promotes CXCR4 ubiquitination and subsequent degradation. Interacts (via the cytoplasmic C-terminal) with ITCH (via the WW domains I and II); the interaction, enhanced by CXCL12, promotes CXCR4 ubiquitination and leads to its degradation. Interacts with extracellular ubiquitin. Interacts with DBN1; this interaction is enhanced by antigenic stimulation. Following LPS binding, may form a complex with GDF5, HSP90AA1 and HSPA8. In terms of processing, phosphorylated on agonist stimulation. Rapidly phosphorylated on serine and threonine residues in the C-terminal. Phosphorylation at Ser-331 and Ser-332 leads to recruitment of ITCH, ubiquitination and protein degradation. Post-translationally, ubiquitinated after ligand binding, leading to its degradation. Ubiquitinated by ITCH at the cell membrane on agonist stimulation. The ubiquitin-dependent mechanism, endosomal sorting complex required for transport (ESCRT), then targets CXCR4 for lysosomal degradation. This process is dependent also on prior Ser-/Thr-phosphorylation in the C-terminal of CXCR4. Also binding of ARRB1 to STAM negatively regulates CXCR4 sorting to lysosomes though modulating ubiquitination of SFR5S. Sulfation is required for efficient binding of CXCL12/SDF-1alpha and promotes its dimerization. In terms of processing, O- and N-glycosylated. N-glycosylation can mask coreceptor function. The O-glycosylation chondroitin sulfate attachment does not affect interaction with CXCL12/SDF-1alpha nor its coreceptor activity. As to expression, lymphocytes, macrophages, neutrophils, microglial cells and astrocytes. Found in spleen, thymus, bone marrow, lymph nodes and, at lower levels in brain, small intestine, stomach and kidney. CXCR4-A is predominant in all tissues tested. During embryonic development, high levels are detected in the endothelium of developing blood vessels and in many regions of the developing brain including the olfactory epithelium, olfactory bulb, hippocampus, cerebellum and spinal cord.

Its subcellular location is the cell membrane. It localises to the cell junction. The protein resides in the early endosome. The protein localises to the late endosome. It is found in the lysosome. Receptor for the C-X-C chemokine CXCL12/SDF-1 that transduces a signal by increasing intracellular calcium ion levels and enhancing MAPK1/MAPK3 activation. Involved in the AKT signaling cascade. Plays a role in regulation of cell migration, e.g. during wound healing. Acts as a receptor for extracellular ubiquitin; leading to enhanced intracellular calcium ions and reduced cellular cAMP levels. Binds bacterial lipopolysaccharide (LPS) et mediates LPS-induced inflammatory response, including TNF secretion by monocytes. Involved in hematopoiesis and in cardiac ventricular septum formation. Also plays an essential role in vascularization of the gastrointestinal tract, probably by regulating vascular branching and/or remodeling processes in endothelial cells. Involved in cerebellar development. In the CNS, could mediate hippocampal-neuron survival. The chain is C-X-C chemokine receptor type 4 (Cxcr4) from Mus musculus (Mouse).